Consider the following 114-residue polypeptide: Large ribosomal subunit protein uL18 (114 aa).

This sequence belongs to the universal ribosomal protein uL18 family. Part of the 50S ribosomal subunit; part of the 5S rRNA/L5/L18/L25 subcomplex. Contacts the 5S and 23S rRNAs.

In terms of biological role, this is one of the proteins that bind and probably mediate the attachment of the 5S RNA into the large ribosomal subunit, where it forms part of the central protuberance. This Porphyromonas gingivalis (strain ATCC 33277 / DSM 20709 / CIP 103683 / JCM 12257 / NCTC 11834 / 2561) protein is Large ribosomal subunit protein uL18.